The chain runs to 137 residues: Large ribosomal subunit protein uL16 (137 aa).

The protein belongs to the universal ribosomal protein uL16 family. As to quaternary structure, part of the 50S ribosomal subunit.

In terms of biological role, binds 23S rRNA and is also seen to make contacts with the A and possibly P site tRNAs. The protein is Large ribosomal subunit protein uL16 of Stenotrophomonas maltophilia (strain K279a).